The primary structure comprises 405 residues: Imidazolonepropionase (405 aa).

Fe(3+) is bound by residues histidine 72 and histidine 74. Zn(2+) contacts are provided by histidine 72 and histidine 74. Residues arginine 81, tyrosine 144, and histidine 177 each coordinate 4-imidazolone-5-propanoate. Residue tyrosine 144 coordinates N-formimidoyl-L-glutamate. Histidine 242 provides a ligand contact to Fe(3+). Histidine 242 provides a ligand contact to Zn(2+). Glutamine 245 lines the 4-imidazolone-5-propanoate pocket. Aspartate 317 lines the Fe(3+) pocket. Residue aspartate 317 participates in Zn(2+) binding. Residues asparagine 319 and glycine 321 each coordinate N-formimidoyl-L-glutamate. Residue threonine 322 participates in 4-imidazolone-5-propanoate binding.

It belongs to the metallo-dependent hydrolases superfamily. HutI family. Requires Zn(2+) as cofactor. The cofactor is Fe(3+).

Its subcellular location is the cytoplasm. The catalysed reaction is 4-imidazolone-5-propanoate + H2O = N-formimidoyl-L-glutamate. Its pathway is amino-acid degradation; L-histidine degradation into L-glutamate; N-formimidoyl-L-glutamate from L-histidine: step 3/3. Its function is as follows. Catalyzes the hydrolytic cleavage of the carbon-nitrogen bond in imidazolone-5-propanoate to yield N-formimidoyl-L-glutamate. It is the third step in the universal histidine degradation pathway. This is Imidazolonepropionase from Erwinia tasmaniensis (strain DSM 17950 / CFBP 7177 / CIP 109463 / NCPPB 4357 / Et1/99).